The sequence spans 134 residues: Acyl carrier protein, chloroplastic (134 aa).

Residues 1–51 (MSTTFCSSVSMQATSLAATTRISFQKPALVSRTNLSFNLSRSIPTRLSVSC) constitute a chloroplast transit peptide. The Carrier domain occupies 55 to 130 (PETVEKVSKI…EAAELIDELV (76 aa)). Ser-90 is subject to O-(pantetheine 4'-phosphoryl)serine.

The protein belongs to the acyl carrier protein (ACP) family. In terms of processing, 4'-phosphopantetheine is transferred from CoA to a specific serine of apo-ACP by acpS. This modification is essential for activity because fatty acids are bound in thioester linkage to the sulfhydryl of the prosthetic group. In terms of tissue distribution, seed.

Its subcellular location is the plastid. It is found in the chloroplast. Its pathway is lipid metabolism; fatty acid biosynthesis. In terms of biological role, carrier of the growing fatty acid chain in fatty acid biosynthesis. The polypeptide is Acyl carrier protein, chloroplastic (ACL1.A1) (Brassica napus (Rape)).